Here is a 125-residue protein sequence, read N- to C-terminus: Ribosome-binding factor A (125 aa).

Belongs to the RbfA family. As to quaternary structure, monomer. Binds 30S ribosomal subunits, but not 50S ribosomal subunits or 70S ribosomes.

The protein localises to the cytoplasm. In terms of biological role, one of several proteins that assist in the late maturation steps of the functional core of the 30S ribosomal subunit. Associates with free 30S ribosomal subunits (but not with 30S subunits that are part of 70S ribosomes or polysomes). Required for efficient processing of 16S rRNA. May interact with the 5'-terminal helix region of 16S rRNA. This chain is Ribosome-binding factor A, found in Xylella fastidiosa (strain M12).